Consider the following 155-residue polypeptide: Peptide methionine sulfoxide reductase MsrB (155 aa).

Residues 15 to 137 (REALIATLNA…NSVSLTFIPT (123 aa)) form the MsrB domain. Residues Cys54, Cys57, Cys103, and Cys106 each contribute to the Zn(2+) site. Cys126 functions as the Nucleophile in the catalytic mechanism.

This sequence belongs to the MsrB Met sulfoxide reductase family. Zn(2+) serves as cofactor.

The enzyme catalyses L-methionyl-[protein] + [thioredoxin]-disulfide + H2O = L-methionyl-(R)-S-oxide-[protein] + [thioredoxin]-dithiol. This is Peptide methionine sulfoxide reductase MsrB from Xylella fastidiosa (strain 9a5c).